Here is a 310-residue protein sequence, read N- to C-terminus: Probable cell division protein WhiA (310 aa).

The segment at residues 274-308 is a DNA-binding region (H-T-H motif); the sequence is SLKELGTLVPGGPISKSGINHRLRKINQFAEQLQK.

Belongs to the WhiA family.

In terms of biological role, involved in cell division and chromosome segregation. The chain is Probable cell division protein WhiA from Lactiplantibacillus plantarum (strain ATCC BAA-793 / NCIMB 8826 / WCFS1) (Lactobacillus plantarum).